Here is a 291-residue protein sequence, read N- to C-terminus: 4-hydroxy-tetrahydrodipicolinate synthase (291 aa).

Thr44 provides a ligand contact to pyruvate. The active-site Proton donor/acceptor is the Tyr132. The active-site Schiff-base intermediate with substrate is Lys160. Residue Ile202 participates in pyruvate binding.

This sequence belongs to the DapA family. In terms of assembly, homotetramer; dimer of dimers.

The protein resides in the cytoplasm. The catalysed reaction is L-aspartate 4-semialdehyde + pyruvate = (2S,4S)-4-hydroxy-2,3,4,5-tetrahydrodipicolinate + H2O + H(+). It functions in the pathway amino-acid biosynthesis; L-lysine biosynthesis via DAP pathway; (S)-tetrahydrodipicolinate from L-aspartate: step 3/4. Its function is as follows. Catalyzes the condensation of (S)-aspartate-beta-semialdehyde [(S)-ASA] and pyruvate to 4-hydroxy-tetrahydrodipicolinate (HTPA). This is 4-hydroxy-tetrahydrodipicolinate synthase from Sphingopyxis alaskensis (strain DSM 13593 / LMG 18877 / RB2256) (Sphingomonas alaskensis).